The sequence spans 82 residues: Small ribosomal subunit protein bS16 (82 aa).

This sequence belongs to the bacterial ribosomal protein bS16 family.

In Serratia proteamaculans (strain 568), this protein is Small ribosomal subunit protein bS16.